Here is a 367-residue protein sequence, read N- to C-terminus: Carbamoyl-phosphate synthase (367 aa).

An ATP-grasp domain is found at 111 to 296 (KEFYNEIGVP…SLCELVNMAA (186 aa)). Position 137–186 (137–186 (KMEFPVVLKQGQGQGGKDIKVAESLDDVKEYFEEFDHALCEKFIEGSEIS)) interacts with ATP. Positions 253, 267, and 269 each coordinate Mg(2+). 3 residues coordinate Mn(2+): aspartate 253, glutamate 267, and asparagine 269.

Belongs to the small carbamoyl-phosphate synthase family. In terms of assembly, forms homodimers and homotetramers (dimers of dimers). Requires Mg(2+) as cofactor. Mn(2+) serves as cofactor.

It catalyses the reaction hydrogencarbonate + NH4(+) + 2 ATP = carbamoyl phosphate + 2 ADP + phosphate + 2 H(+). Its function is as follows. Catalyzes the synthesis of carbamoyl phosphate from ATP, ammonium and bicarbonate. Proceeds via a three-step mechanism, i.e. the phosphorylation of hydrogencarbonate to carboxyphosphate, a nucleophilic attack of ammonia on carboxyphosphate yielding carbamate, and the phosphorylation of carbamate forming carbamoyl phosphate. In M.smithii, the predominant archaeon in the human gut, one function of this enzyme may be to sequester ammonia, a scarce nutrient in the intestine which is the major source of nitrogen in M.smithii for the biosynthesis of nucleotides, amino acids, and many other metabolites. In Methanobrevibacter smithii (strain ATCC 35061 / DSM 861 / OCM 144 / PS), this protein is Carbamoyl-phosphate synthase.